The sequence spans 562 residues: ATP-dependent RNA helicase dbp2 (562 aa).

A Q motif motif is present at residues 132-160 (ETFDEAGFPRYVMDEVKAQGFPAPTAIQS). The 176-residue stretch at 163 to 338 (WPMALSGRDV…ADFLTDFIQV (176 aa)) folds into the Helicase ATP-binding domain. 176–183 (AETGSGKT) contributes to the ATP binding site. A DEAD box motif is present at residues 286 to 289 (DEAD). A Helicase C-terminal domain is found at 370–515 (HLEKIMEGRE…QIDPRLAEMA (146 aa)). An RNA-binding RGG-box region spans residues 526 to 548 (GGYRGRGGGGWRGGRGGGGGGGS). Gly residues predominate over residues 536-550 (WRGGRGGGGGGGSVG). Positions 536–562 (WRGGRGGGGGGGSVGGANALPLNNRRW) are disordered.

It belongs to the DEAD box helicase family. DDX5/DBP2 subfamily. In terms of assembly, associates with polysomes.

Its subcellular location is the cytoplasm. The protein localises to the nucleus. It carries out the reaction ATP + H2O = ADP + phosphate + H(+). In terms of biological role, ATP-dependent RNA helicase involved nonsense-mediated mRNA decay and ribosome biogenesis through rRNA processing. The sequence is that of ATP-dependent RNA helicase dbp2 (drh-1) from Neurospora crassa (strain ATCC 24698 / 74-OR23-1A / CBS 708.71 / DSM 1257 / FGSC 987).